A 296-amino-acid polypeptide reads, in one-letter code: Phosphatidylserine decarboxylase proenzyme (296 aa).

Residues aspartate 113, histidine 169, and serine 256 each act as charge relay system; for autoendoproteolytic cleavage activity in the active site. Residue serine 256 is the Schiff-base intermediate with substrate; via pyruvic acid; for decarboxylase activity of the active site. Position 256 is a pyruvic acid (Ser); by autocatalysis (serine 256).

It belongs to the phosphatidylserine decarboxylase family. PSD-B subfamily. Prokaryotic type II sub-subfamily. As to quaternary structure, heterodimer of a large membrane-associated beta subunit and a small pyruvoyl-containing alpha subunit. Pyruvate serves as cofactor. Post-translationally, is synthesized initially as an inactive proenzyme. Formation of the active enzyme involves a self-maturation process in which the active site pyruvoyl group is generated from an internal serine residue via an autocatalytic post-translational modification. Two non-identical subunits are generated from the proenzyme in this reaction, and the pyruvate is formed at the N-terminus of the alpha chain, which is derived from the carboxyl end of the proenzyme. The autoendoproteolytic cleavage occurs by a canonical serine protease mechanism, in which the side chain hydroxyl group of the serine supplies its oxygen atom to form the C-terminus of the beta chain, while the remainder of the serine residue undergoes an oxidative deamination to produce ammonia and the pyruvoyl prosthetic group on the alpha chain. During this reaction, the Ser that is part of the protease active site of the proenzyme becomes the pyruvoyl prosthetic group, which constitutes an essential element of the active site of the mature decarboxylase.

It is found in the cell membrane. The catalysed reaction is a 1,2-diacyl-sn-glycero-3-phospho-L-serine + H(+) = a 1,2-diacyl-sn-glycero-3-phosphoethanolamine + CO2. It participates in phospholipid metabolism; phosphatidylethanolamine biosynthesis; phosphatidylethanolamine from CDP-diacylglycerol: step 2/2. Functionally, catalyzes the formation of phosphatidylethanolamine (PtdEtn) from phosphatidylserine (PtdSer). This is Phosphatidylserine decarboxylase proenzyme from Clostridium beijerinckii (strain ATCC 51743 / NCIMB 8052) (Clostridium acetobutylicum).